We begin with the raw amino-acid sequence, 252 residues long: Imidazole glycerol phosphate synthase subunit HisF (252 aa).

Catalysis depends on residues Asp11 and Asp130.

It belongs to the HisA/HisF family. As to quaternary structure, heterodimer of HisH and HisF.

It is found in the cytoplasm. The catalysed reaction is 5-[(5-phospho-1-deoxy-D-ribulos-1-ylimino)methylamino]-1-(5-phospho-beta-D-ribosyl)imidazole-4-carboxamide + L-glutamine = D-erythro-1-(imidazol-4-yl)glycerol 3-phosphate + 5-amino-1-(5-phospho-beta-D-ribosyl)imidazole-4-carboxamide + L-glutamate + H(+). The protein operates within amino-acid biosynthesis; L-histidine biosynthesis; L-histidine from 5-phospho-alpha-D-ribose 1-diphosphate: step 5/9. In terms of biological role, IGPS catalyzes the conversion of PRFAR and glutamine to IGP, AICAR and glutamate. The HisF subunit catalyzes the cyclization activity that produces IGP and AICAR from PRFAR using the ammonia provided by the HisH subunit. In Bacillus velezensis (strain DSM 23117 / BGSC 10A6 / LMG 26770 / FZB42) (Bacillus amyloliquefaciens subsp. plantarum), this protein is Imidazole glycerol phosphate synthase subunit HisF.